A 759-amino-acid chain; its full sequence is Glycerophosphodiester phosphodiesterase GDPDL3 (759 aa).

The N-terminal stretch at 1 to 27 (MRGLLRASSLLLCGVILIQLLAAQIHA) is a signal peptide. Over 28–738 (QSKKPKSPWP…TNAQAPSGQT (711 aa)) the chain is Extracellular. Residues 44–344 (PLVIARGGFS…DFPITASASL (301 aa)) enclose the GP-PDE 1 domain. Residues asparagine 99, asparagine 186, asparagine 242, asparagine 251, asparagine 326, asparagine 353, asparagine 413, asparagine 424, asparagine 488, asparagine 528, asparagine 540, and asparagine 647 are each glycosylated (N-linked (GlcNAc...) asparagine). A GP-PDE 2 domain is found at 360-661 (FLVITKDGAS…EFPFTAARYK (302 aa)). The tract at residues 702–734 (FTDADVTEPPLPPVTAKAPTSSPGTPSTNAQAP) is disordered. Polar residues predominate over residues 719-734 (APTSSPGTPSTNAQAP). The chain crosses the membrane as a helical span at residues 739–759 (RITLSLLLSVFAMVLASLLLL).

It belongs to the glycerophosphoryl diester phosphodiesterase family. As to expression, expressed in roots, shoots, rosette and cauline leaves, stems, flowers and siliques.

The protein resides in the cell membrane. The catalysed reaction is a sn-glycero-3-phosphodiester + H2O = an alcohol + sn-glycerol 3-phosphate + H(+). In terms of biological role, involved in primary cell wall organization. Required for the accumulation of crystalline cellulose. The sequence is that of Glycerophosphodiester phosphodiesterase GDPDL3 from Arabidopsis thaliana (Mouse-ear cress).